The chain runs to 34 residues: Photosystem II reaction center protein M (34 aa).

A helical membrane pass occupies residues Ile5–Leu25.

It belongs to the PsbM family. PSII is composed of 1 copy each of membrane proteins PsbA, PsbB, PsbC, PsbD, PsbE, PsbF, PsbH, PsbI, PsbJ, PsbK, PsbL, PsbM, PsbT, PsbX, PsbY, PsbZ, Psb30/Ycf12, at least 3 peripheral proteins of the oxygen-evolving complex and a large number of cofactors. It forms dimeric complexes.

It is found in the plastid. Its subcellular location is the chloroplast thylakoid membrane. Its function is as follows. One of the components of the core complex of photosystem II (PSII). PSII is a light-driven water:plastoquinone oxidoreductase that uses light energy to abstract electrons from H(2)O, generating O(2) and a proton gradient subsequently used for ATP formation. It consists of a core antenna complex that captures photons, and an electron transfer chain that converts photonic excitation into a charge separation. This subunit is found at the monomer-monomer interface. In Pleurastrum terricola (Filamentous green alga), this protein is Photosystem II reaction center protein M.